The following is a 201-amino-acid chain: Sorting nexin-10 (201 aa).

The segment at 8–125 is required for interaction with ATP6V1D; that stretch reads EEFVSVWVRD…SLHLFLQSHL (118 aa). The PX domain occupies 10–127; the sequence is FVSVWVRDPR…HLFLQSHLNS (118 aa). A 1,2-diacyl-sn-glycero-3-phospho-(1D-myo-inositol-3-phosphate)-binding residues include R53, K79, and R94. The segment at 155–201 is disordered; the sequence is RFPEEEEEGKKDADVEYDSESSSSGLGHSSDDSSSHGCKTSPALQES.

This sequence belongs to the sorting nexin family. In terms of assembly, interacts with ATP6V1D; may play a role in ciliogenesis. As to expression, expressed in femur, calvariae and teeth.

It localises to the cytoplasm. The protein localises to the endosome membrane. Its subcellular location is the cytoskeleton. The protein resides in the microtubule organizing center. It is found in the centrosome. Probable phosphoinositide-binding protein involved in protein sorting and membrane trafficking in endosomes. Plays a role in cilium biogenesis through regulation of the transport and the localization of proteins to the cilium. Required for the localization to the cilium of V-ATPase subunit ATP6V1D and ATP6V0D1, and RAB8A. Involved in osteoclast differentiation and therefore bone resorption. In Mus musculus (Mouse), this protein is Sorting nexin-10 (Snx10).